The primary structure comprises 1488 residues: Chromosome partition protein MukB (1488 aa).

An ATP-binding site is contributed by 34 to 41 (GGNGAGKS). 3 coiled-coil regions span residues 326 to 418 (LEAD…QYNQ), 444 to 472 (LDTF…QTAH), and 509 to 602 (RHLA…QRAP). The interval 666-783 (PGGAEDQRLN…SLPIFGRAAR (118 aa)) is flexible hinge. 3 coiled-coil regions span residues 835–923 (EAEI…AKLE), 977–1116 (EMLS…AKAG), and 1209–1265 (VEAI…LQSV). Residues 1049 to 1074 (ADSGAEERARQRRDELHAQLSNNRSR) form a disordered region. Over residues 1051-1065 (SGAEERARQRRDELH) the composition is skewed to basic and acidic residues.

This sequence belongs to the SMC family. MukB subfamily. As to quaternary structure, homodimerization via its hinge domain. Binds to DNA via its C-terminal region. Interacts, and probably forms a ternary complex, with MukE and MukF via its C-terminal region. The complex formation is stimulated by calcium or magnesium. Interacts with tubulin-related protein FtsZ.

Its subcellular location is the cytoplasm. It is found in the nucleoid. Its function is as follows. Plays a central role in chromosome condensation, segregation and cell cycle progression. Functions as a homodimer, which is essential for chromosome partition. Involved in negative DNA supercoiling in vivo, and by this means organize and compact chromosomes. May achieve or facilitate chromosome segregation by condensation DNA from both sides of a centrally located replisome during cell division. The protein is Chromosome partition protein MukB of Salmonella paratyphi A (strain ATCC 9150 / SARB42).